Reading from the N-terminus, the 593-residue chain is Prospero homeobox protein 2 (593 aa).

Disordered regions lie at residues 24–48, 79–130, 153–199, 260–284, 298–333, and 356–388; these read CMDQERSPATAEAGRDSFPSGQLPS, SPSS…GGTR, TEPR…KDLC, QERSCQGLASEGRNQPSPPGRSAYK, PQAGVPLGNSTLARPLDSPMCPVSPRGVPRSYQSPL, and GRGPDGQWSGSPPQDAAFQSHTSPESAQQPWGL. The span at 87–99 shows a compositional bias: basic and acidic residues; that stretch reads RARESLRCPEKGR. A compositionally biased stretch (low complexity) spans 167-181; the sequence is PRSSPRARPRNSCSS. Polar residues predominate over residues 363-380; sequence WSGSPPQDAAFQSHTSPE. In terms of domain architecture, Prospero-type homeo spans 433 to 491; sequence QEGLSPGHLKKAKLMFFFTRYPSSSLLKAYFPDVQFNRCITSQMIKWFSNFREFYYIQM. Residues 433–591 form a homeo-Prospero region; it reads QEGLSPGHLK…KSPSFLPGLF (159 aa). Residues 492-591 enclose the Prospero domain; that stretch reads EKYARQALSD…KSPSFLPGLF (100 aa).

It belongs to the Prospero homeodomain family. Expressed in testis.

The protein resides in the nucleus. In terms of biological role, transcription regulator. Does not seem to be essential for embryonic development and postnatal survival. The chain is Prospero homeobox protein 2 (Prox2) from Mus musculus (Mouse).